The primary structure comprises 316 residues: Pantothenate kinase (316 aa).

Residue 95-102 (GSVAVGKS) coordinates ATP.

This sequence belongs to the prokaryotic pantothenate kinase family.

The protein resides in the cytoplasm. It catalyses the reaction (R)-pantothenate + ATP = (R)-4'-phosphopantothenate + ADP + H(+). It functions in the pathway cofactor biosynthesis; coenzyme A biosynthesis; CoA from (R)-pantothenate: step 1/5. This Shigella dysenteriae serotype 1 (strain Sd197) protein is Pantothenate kinase.